We begin with the raw amino-acid sequence, 815 residues long: Neuronal PAS domain-containing protein 2 (815 aa).

Over residues 1–10 (MDEDEKDRAK) the composition is skewed to basic and acidic residues. Residues 1–21 (MDEDEKDRAKRASRNKSEKKR) form a disordered region. The segment at 1 to 61 (MDEDEKDRAK…VIGFLQKHNE (61 aa)) is sufficient for heterodimer formation with BMAL1, E-box binding and for the effect of NADPH. The region spanning 9–59 (AKRASRNKSEKKRRDQFNVLIKELSSMLPGNTRKMDKTTVLEKVIGFLQKH) is the bHLH domain. Residues 82–152 (NEEFTQLMLE…KMLSSCMLMT (71 aa)) enclose the PAS 1 domain. Residues His119 and His171 each contribute to the heme b site. The 71-residue stretch at 237-307 (FLKEMCIVEE…RCHEHLMQFG (71 aa)) folds into the PAS 2 domain. The 44-residue stretch at 311–354 (SCCYRFLTKGQQWIWLQTHYYITYHQWNSKPEFIVCTHMVVSYA) folds into the PAC domain. Low complexity predominate over residues 405 to 420 (RTPSVSSRSSPKSSHT). Disordered regions lie at residues 405–467 (RTPS…SLPS), 584–656 (PGQI…AAGC), and 728–815 (FATT…QPLR). 3 stretches are compositionally biased toward polar residues: residues 425-462 (PAST…TALQ), 588-608 (ASPQ…SSQG), and 616-630 (ELTT…STAT). 2 stretches are compositionally biased toward low complexity: residues 633-655 (GPST…SAAG) and 732-752 (PPSQ…HQQQ). The segment covering 753–786 (RYLQVQTPSSLHNEQTDSLLLSSYSPQQGNMGYH) has biased composition (polar residues). Over residues 787–815 (QTQQQQQQQQLPRRSNSLSESSNLPQPLR) the composition is skewed to low complexity.

Component of the circadian clock oscillator which includes the CRY proteins, CLOCK or NPAS2, BMAL1 or BMAL2, CSNK1D and/or CSNK1E, TIMELESS and the PER proteins. Efficient DNA binding requires dimerization with another bHLH protein. Forms a heterodimer with BMAL1 and this heterodimerization is required for E-box-dependent transactivation. Requires heme as cofactor. Expressed in the retinal photoreceptor cells (at protein level). Expressed in the pineal gland and retina.

It localises to the nucleus. Carbon monoxide (CO) and the redox state of the cell can modulate the transcriptional activity of the NPAS2-BMAL1 heterodimer. NADH and NADPH enhance the DNA-binding activity of the heterodimer whereas CO binds the heme group in NPAS2 and inhibits the DNA-binding activity of the heterodimer. In terms of biological role, transcriptional activator which forms a core component of the circadian clock. The circadian clock, an internal time-keeping system, regulates various physiological processes through the generation of approximately 24 hour circadian rhythms in gene expression, which are translated into rhythms in metabolism and behavior. It is derived from the Latin roots 'circa' (about) and 'diem' (day) and acts as an important regulator of a wide array of physiological functions including metabolism, sleep, body temperature, blood pressure, endocrine, immune, cardiovascular, and renal function. Consists of two major components: the central clock, residing in the suprachiasmatic nucleus (SCN) of the brain, and the peripheral clocks that are present in nearly every tissue and organ system. Both the central and peripheral clocks can be reset by environmental cues, also known as Zeitgebers (German for 'timegivers'). The predominant Zeitgeber for the central clock is light, which is sensed by retina and signals directly to the SCN. The central clock entrains the peripheral clocks through neuronal and hormonal signals, body temperature and feeding-related cues, aligning all clocks with the external light/dark cycle. Circadian rhythms allow an organism to achieve temporal homeostasis with its environment at the molecular level by regulating gene expression to create a peak of protein expression once every 24 hours to control when a particular physiological process is most active with respect to the solar day. Transcription and translation of core clock components (CLOCK, NPAS2, BMAL1, BMAL2, PER1, PER2, PER3, CRY1 and CRY2) plays a critical role in rhythm generation, whereas delays imposed by post-translational modifications (PTMs) are important for determining the period (tau) of the rhythms (tau refers to the period of a rhythm and is the length, in time, of one complete cycle). A diurnal rhythm is synchronized with the day/night cycle, while the ultradian and infradian rhythms have a period shorter and longer than 24 hours, respectively. Disruptions in the circadian rhythms contribute to the pathology of cardiovascular diseases, cancer, metabolic syndromes and aging. A transcription/translation feedback loop (TTFL) forms the core of the molecular circadian clock mechanism. Transcription factors, CLOCK or NPAS2 and BMAL1 or BMAL2, form the positive limb of the feedback loop, act in the form of a heterodimer and activate the transcription of core clock genes and clock-controlled genes (involved in key metabolic processes), harboring E-box elements (5'-CACGTG-3') within their promoters. The core clock genes: PER1/2/3 and CRY1/2 which are transcriptional repressors form the negative limb of the feedback loop and interact with the CLOCK|NPAS2-BMAL1|BMAL2 heterodimer inhibiting its activity and thereby negatively regulating their own expression. This heterodimer also activates nuclear receptors NR1D1/2 and RORA/B/G, which form a second feedback loop and which activate and repress BMAL1 transcription, respectively. NPAS2 positively regulates the circadian expression of AANAT in the retinal photoreceptor cells. The polypeptide is Neuronal PAS domain-containing protein 2 (NPAS2) (Gallus gallus (Chicken)).